We begin with the raw amino-acid sequence, 396 residues long: E3 ubiquitin-protein transferase MAEA (396 aa).

Residues 1–124 form an extracellular and involved in cell to cell contact region; it reads MAVQESAAQL…AAASMWKRKR (124 aa). Thr-28 is subject to Phosphothreonine. A LisH domain is found at 121 to 153; the sequence is KRKRMDRMMVEHLLRCGYYNTAVKLARQSGIED. Residues 159–216 enclose the CTLH domain; the sequence is MFLTAKEVEESLERRETATCLAWCHDNKSRLRKMKSCLEFSLRIQEFIELVRQNKRLD. An RING-Gid-type zinc finger spans residues 314 to 381; sequence CPVCSRSLNK…QDDKVVCPRT (68 aa).

In terms of assembly, identified in the CTLH complex that contains GID4, RANBP9 and/or RANBP10, MKLN1, MAEA, RMND5A (or alternatively its paralog RMND5B), GID8, ARMC8, WDR26 and YPEL5. Within this complex, MAEA, RMND5A (or alternatively its paralog RMND5B), GID8, WDR26, and RANBP9 and/or RANBP10 form the catalytic core, while GID4, MKLN1, ARMC8 and YPEL5 have ancillary roles. Interacts with F-actin. Autoubiquitinated as component of the CTLH E3 ubiquitin-protein ligase complex (in vitro). Detected in embryonic fibroblasts. Detected in macrophages. Detected in heart. liver, spleen and kidney (at protein level).

The protein localises to the cytoplasm. The protein resides in the nucleus. It is found in the nucleoplasm. Its subcellular location is the nucleus matrix. It localises to the cell membrane. The protein localises to the cytoskeleton. It catalyses the reaction S-ubiquitinyl-[E2 ubiquitin-conjugating enzyme]-L-cysteine + [acceptor protein]-L-lysine = [E2 ubiquitin-conjugating enzyme]-L-cysteine + N(6)-ubiquitinyl-[acceptor protein]-L-lysine.. Its function is as follows. Core component of the CTLH E3 ubiquitin-protein ligase complex that selectively accepts ubiquitin from UBE2H and mediates ubiquitination and subsequent proteasomal degradation of the transcription factor HBP1. MAEA and RMND5A are both required for catalytic activity of the CTLH E3 ubiquitin-protein ligase complex. MAEA is required for normal cell proliferation. The CTLH E3 ubiquitin-protein ligase complex is not required for the degradation of enzymes involved in gluconeogenesis, such as FBP1. Plays a role in erythroblast enucleation during erythrocyte maturation and in the development of mature macrophages. Mediates the attachment of erythroid cell to mature macrophages; this MAEA-mediated contact inhibits erythroid cell apoptosis. Participates in erythroblastic island formation, which is the functional unit of definitive erythropoiesis. Associates with F-actin to regulate actin distribution in erythroblasts and macrophages. May contribute to nuclear architecture and cells division events. The chain is E3 ubiquitin-protein transferase MAEA (Maea) from Mus musculus (Mouse).